A 478-amino-acid polypeptide reads, in one-letter code: Glutamate--tRNA ligase (478 aa).

The 'HIGH' region motif lies at 15 to 25 (PSPTGFLHIGG). Residues 244–248 (KLSKR) carry the 'KMSKS' region motif. Lys-247 lines the ATP pocket.

This sequence belongs to the class-I aminoacyl-tRNA synthetase family. Glutamate--tRNA ligase type 1 subfamily. As to quaternary structure, monomer.

Its subcellular location is the cytoplasm. It carries out the reaction tRNA(Glu) + L-glutamate + ATP = L-glutamyl-tRNA(Glu) + AMP + diphosphate. Its function is as follows. Catalyzes the attachment of glutamate to tRNA(Glu) in a two-step reaction: glutamate is first activated by ATP to form Glu-AMP and then transferred to the acceptor end of tRNA(Glu). The chain is Glutamate--tRNA ligase from Bradyrhizobium sp. (strain ORS 278).